Consider the following 275-residue polypeptide: Ammonia transport outward protein 3 (275 aa).

The Extracellular segment spans residues 1-84; it reads MTSSASSPQD…NCAKYTPHQF (84 aa). Serine 4 is modified (phosphoserine). The helical transmembrane segment at 85 to 105 threads the bilayer; that stretch reads ANPVPLGLASFSLSCLVLSLI. Residues 106-120 are Cytoplasmic-facing; the sequence is NANVRGVTDGKWALS. Residues 121–141 form a helical membrane-spanning segment; sequence LFMFFGGAIELFAGLLCFVIG. The Extracellular portion of the chain corresponds to 142–181; that stretch reads DTYAMTVFSSFGGFWICYGYGLTDTDNLVSGYTDPTMLNN. A helical transmembrane segment spans residues 182–202; sequence VIGFFLAGWTVFTFLMLMCTL. The Cytoplasmic segment spans residues 203–207; sequence KSTWG. The helical transmembrane segment at 208–228 threads the bilayer; the sequence is LFLLLTFLDLTFLLLCIGTFI. Topologically, residues 229–236 are extracellular; sequence DNNNLKMA. Residues 237 to 257 traverse the membrane as a helical segment; the sequence is GGYFGILSSCCGWYSLYCSVV. Over 258-275 the chain is Cytoplasmic; that stretch reads SPSNSYLAFRAHTMPNAP.

It belongs to the acetate uptake transporter (AceTr) (TC 2.A.96) family.

The protein resides in the cell membrane. Functionally, transporter protein required for ammonia export. Induced in rho(0) cells, probably to eliminate the excess ammonia that arises because of a potential defect in ammonia assimilation in those cells. The polypeptide is Ammonia transport outward protein 3 (ATO3) (Saccharomyces cerevisiae (strain ATCC 204508 / S288c) (Baker's yeast)).